A 221-amino-acid chain; its full sequence is Endonuclease V (221 aa).

Mg(2+) contacts are provided by Asp-44 and Asp-112.

This sequence belongs to the endonuclease V family. It depends on Mg(2+) as a cofactor.

It localises to the cytoplasm. The enzyme catalyses Endonucleolytic cleavage at apurinic or apyrimidinic sites to products with a 5'-phosphate.. Its function is as follows. DNA repair enzyme involved in the repair of deaminated bases. Selectively cleaves double-stranded DNA at the second phosphodiester bond 3' to a deoxyinosine leaving behind the intact lesion on the nicked DNA. This Nostoc sp. (strain PCC 7120 / SAG 25.82 / UTEX 2576) protein is Endonuclease V.